The primary structure comprises 900 residues: Suppressor of activated egl-4 protein 1 (900 aa).

Disordered regions lie at residues 1-75 (MPPP…HLPT), 340-380 (PVAE…SRKN), and 406-425 (WAST…ESLE). A compositionally biased stretch (polar residues) spans 53-75 (ASGQQHRPSIMSGQSHQNNHLPT). Basic and acidic residues-rich tracts occupy residues 358-377 (GDMK…DGPS) and 412-425 (ADEK…ESLE). Residues 451 to 544 (PHINLGKNYQ…AAVEDLLRSD (94 aa)) enclose the ELM2 domain. Residues 560 to 611 (NDSVLWTPDEIYQFQDAIYQSEKDFDKVAVELPGKSVKECVQFYYTWKKDCP) form the SANT domain. The segment at 710–729 (PTAPRAHHTPSASASKKGAQ) is disordered. The C2H2-type zinc-finger motif lies at 736 to 758 (FHCRLCDKCFEKVKSLNAHMKSH).

In terms of assembly, may be a component of a histone deacetylase complex containing saeg-2, saeg-1 and hda-2. May interact with egl-4. In terms of tissue distribution, ubiquitously expressed.

The protein resides in the nucleus. As a likely component of a histone deacetylase complex, together with saeg-2 and hda-2, functions downstream of the cAMP-dependent kinase egl-4 to regulate the expression of genes required for egg-laying and foraging. This is Suppressor of activated egl-4 protein 1 from Caenorhabditis elegans.